Reading from the N-terminus, the 166-residue chain is Anaerobic nitrite reductase NSHB1 (166 aa).

One can recognise a Globin domain in the interval 13 to 163 (SFSEEQEALV…LVAAIKQEMK (151 aa)). Residues 46 to 50 (EVAPS) carry the Homodimerization motif. 6 residues coordinate heme b: S56, K70, H74, R104, T108, and H109. Positions 116–128 (DAHFEVVKFALLD) match the Homodimerization motif.

The protein belongs to the plant globin family. In terms of assembly, homodimer. Heme b serves as cofactor. In terms of tissue distribution, expressed in coleoptiles, embryos, leaves, seminal roots and roots.

It localises to the cytoplasm. It is found in the nucleus. It catalyses the reaction Fe(III)-heme b-[protein] + nitric oxide + H2O = Fe(II)-heme b-[protein] + nitrite + 2 H(+). Slowly reduced by ascorbic acid (AA); this reaction may become a source of nitric oxide (NO) during hypoxia. Phytoglobin that reduces nitrite to nitric oxide under anoxic conditions (e.g. during flooding or in waterlogged soil). May not function as an oxygen storage or transport protein. Has an unusually high affinity for O(2) through a hexacoordinate heme iron because of a very low dissociation constant. This is Anaerobic nitrite reductase NSHB1 from Oryza sativa subsp. japonica (Rice).